Here is a 421-residue protein sequence, read N- to C-terminus: MNENQKSFDSDKSESEDEQKNGRVKVRSRKTDDNEGYTWEGEYQRSWDIVQEDAEGSLVGVIAGLIQSGKRKRLLRDTTPLQRGIIRHMVLVLDLSNSMEERDFHHKRFDLQIKYASEFVLEFFEQNPISQLSIIGVMDGIAHRITDLHGNPQSHIQKLKSLRDCSGNFSLQNALEMARASLSHIASHGTREVLIIFGSILSSDPGDIFKTIDALVHDSIRVRIVGLAAEVAICKEICNKTNSSTKNAYGVVISEQHFRELLLESTIPPATDSAKTTDASLVMMGFPSKVVEQLPSLCACHSIPSRGGFHCPRCKAKVCTLPIECPSCSLVLILSTHLARSYHHLFPLKNWSEIPWSANPKSTHCFACQLPFPKPPVSPFDESTSSMRYACPSCKNHFCLDCDVFAHEQLHECYGCQCSGN.

Positions 1-21 (MNENQKSFDSDKSESEDEQKN) are enriched in basic and acidic residues. Residues 1-35 (MNENQKSFDSDKSESEDEQKNGRVKVRSRKTDDNE) are disordered. Ser-15 carries the post-translational modification Phosphoserine. Positions 88 to 267 (HMVLVLDLSN…FRELLLESTI (180 aa)) constitute a VWFA domain. The C4-type zinc finger occupies 311 to 328 (CPRCKAKVCTLPIECPSC).

This sequence belongs to the GTF2H2 family. In terms of assembly, component of the 7-subunit TFIIH core complex composed of XPB/ptr8, XPD/rad15, ssl1, tfb1, tfb2, tfb4 and tfb5, which is active in NER. The core complex associates with the 3-subunit CTD-kinase module TFIIK composed of mcs2/cyclin H, mcs6/cdk7 and pmh1/tfb3 to form the 10-subunit holoenzyme (holo-TFIIH) active in transcription.

It is found in the nucleus. Component of the general transcription and DNA repair factor IIH (TFIIH) core complex, which is involved in general and transcription-coupled nucleotide excision repair (NER) of damaged DNA and, when complexed to TFIIK, in RNA transcription by RNA polymerase II. In NER, TFIIH acts by opening DNA around the lesion to allow the excision of the damaged oligonucleotide and its replacement by a new DNA fragment. In transcription, TFIIH has an essential role in transcription initiation. When the pre-initiation complex (PIC) has been established, TFIIH is required for promoter opening and promoter escape. Phosphorylation of the C-terminal tail (CTD) of the largest subunit of RNA polymerase II by the kinase module TFIIK controls the initiation of transcription. The polypeptide is General transcription and DNA repair factor IIH subunit ssl1 (ssl1) (Schizosaccharomyces pombe (strain 972 / ATCC 24843) (Fission yeast)).